The sequence spans 209 residues: Thiamine-phosphate synthase (209 aa).

Residues 41 to 45 and asparagine 73 each bind 4-amino-2-methyl-5-(diphosphooxymethyl)pyrimidine; that span reads QLREK. Mg(2+)-binding residues include aspartate 74 and aspartate 93. Position 112 (serine 112) interacts with 4-amino-2-methyl-5-(diphosphooxymethyl)pyrimidine. 138–140 lines the 2-[(2R,5Z)-2-carboxy-4-methylthiazol-5(2H)-ylidene]ethyl phosphate pocket; that stretch reads TGT. Lysine 141 contributes to the 4-amino-2-methyl-5-(diphosphooxymethyl)pyrimidine binding site. 2-[(2R,5Z)-2-carboxy-4-methylthiazol-5(2H)-ylidene]ethyl phosphate is bound by residues glycine 168 and 188–189; that span reads VS.

This sequence belongs to the thiamine-phosphate synthase family. It depends on Mg(2+) as a cofactor.

The catalysed reaction is 2-[(2R,5Z)-2-carboxy-4-methylthiazol-5(2H)-ylidene]ethyl phosphate + 4-amino-2-methyl-5-(diphosphooxymethyl)pyrimidine + 2 H(+) = thiamine phosphate + CO2 + diphosphate. The enzyme catalyses 2-(2-carboxy-4-methylthiazol-5-yl)ethyl phosphate + 4-amino-2-methyl-5-(diphosphooxymethyl)pyrimidine + 2 H(+) = thiamine phosphate + CO2 + diphosphate. It carries out the reaction 4-methyl-5-(2-phosphooxyethyl)-thiazole + 4-amino-2-methyl-5-(diphosphooxymethyl)pyrimidine + H(+) = thiamine phosphate + diphosphate. It participates in cofactor biosynthesis; thiamine diphosphate biosynthesis; thiamine phosphate from 4-amino-2-methyl-5-diphosphomethylpyrimidine and 4-methyl-5-(2-phosphoethyl)-thiazole: step 1/1. Condenses 4-methyl-5-(beta-hydroxyethyl)thiazole monophosphate (THZ-P) and 2-methyl-4-amino-5-hydroxymethyl pyrimidine pyrophosphate (HMP-PP) to form thiamine monophosphate (TMP). This is Thiamine-phosphate synthase from Alkaliphilus oremlandii (strain OhILAs) (Clostridium oremlandii (strain OhILAs)).